Reading from the N-terminus, the 782-residue chain is LPS-assembly protein LptD (782 aa).

A signal peptide spans 1-23 (MNKKHTLISLAILTALYSQQSLA).

Belongs to the LptD family. In terms of assembly, component of the lipopolysaccharide transport and assembly complex. Interacts with LptE and LptA.

It is found in the cell outer membrane. Its function is as follows. Together with LptE, is involved in the assembly of lipopolysaccharide (LPS) at the surface of the outer membrane. This is LPS-assembly protein LptD from Haemophilus influenzae (strain 86-028NP).